Here is a 100-residue protein sequence, read N- to C-terminus: Co-chaperonin GroES (100 aa).

This sequence belongs to the GroES chaperonin family. Heptamer of 7 subunits arranged in a ring. Interacts with the chaperonin GroEL.

Its subcellular location is the cytoplasm. Its function is as follows. Together with the chaperonin GroEL, plays an essential role in assisting protein folding. The GroEL-GroES system forms a nano-cage that allows encapsulation of the non-native substrate proteins and provides a physical environment optimized to promote and accelerate protein folding. GroES binds to the apical surface of the GroEL ring, thereby capping the opening of the GroEL channel. The chain is Co-chaperonin GroES from Nocardia farcinica (strain IFM 10152).